A 455-amino-acid polypeptide reads, in one-letter code: Neuronal acetylcholine receptor subunit beta-3 (455 aa).

The signal sequence occupies residues 1 to 20 (MLCLMLCVLCWSRSDVAALG). Residues 21-229 (SVVENEDALL…VTYSFVLRRL (209 aa)) lie on the Extracellular side of the membrane. N-linked (GlcNAc...) asparagine glycosylation is found at N48 and N163. C150 and C164 are oxidised to a cystine. 3 consecutive transmembrane segments (helical) span residues 230–254 (PLFY…VFYL), 262–279 (LSLS…LLVI), and 296–317 (YLLF…VINV). The Cytoplasmic portion of the chain corresponds to 318-425 (HHRSSATYHP…WKFVAQVLDR (108 aa)). The helical transmembrane segment at 426-444 (IFLWLFLVVSVTGSVLIFT) threads the bilayer.

This sequence belongs to the ligand-gated ion channel (TC 1.A.9) family. Acetylcholine receptor (TC 1.A.9.1) subfamily. Beta-3/CHRNB3 sub-subfamily. As to quaternary structure, neuronal AChR seems to be composed of two different type of subunits: alpha and beta. CHRNB3/beta-3 subunit is only able to form functional nAChRs when co-assembled with another beta subunit. Participates in pentameric assemblies along with CHRNA4/alpha-4 and CHRNB2/beta-2 subunits and with CHRNA6/alpha-6 as well, forming stoichiometries such as (CHRNA3:CHRNB4)2:CHRNB3, (CHRNA4:CHRNB2)2:CHRNB3 or (CHRNA6:CHRNB2)2:CHRNB3. As to expression, relatively abundant in the developing retina and in the trigeminal ganglion.

Its subcellular location is the synaptic cell membrane. It is found in the cell membrane. It carries out the reaction Ca(2+)(in) = Ca(2+)(out). It catalyses the reaction K(+)(in) = K(+)(out). The catalysed reaction is Na(+)(in) = Na(+)(out). Activated by a myriad of ligands such as acetylcholine, cytisine, nicotine, choline and epibatidine. Component of neuronal acetylcholine receptors (nAChRs) that function as pentameric, ligand-gated cation channels with high calcium permeability among other activities. nAChRs are excitatory neurotrasnmitter receptors formed by a collection of nAChR subunits known to mediate synaptic transmission in the nervous system and the neuromuscular junction. Each nAchR subunit confers differential attributes to channel properties, including activation, deactivation and desensitization kinetics, pH sensitivity, cation permeability, and binding to allosteric modulators. Has an accessory rather than functional role and is only able to form functional nAChRs when co-assembled with another beta subunit. Participates in pentameric assemblies along with CHRNA3, CHRNA4, CHRNA6, CHRNB2 and CHRNB4. Modulates receptor assembly and increases receptor sensitivity to nicotine when associated with CHRNB2, CHRNA4 and/or CHRNA6 as well as CHRNA3 and CHRNB4. Seems to play a role in nicotine addiction. The chain is Neuronal acetylcholine receptor subunit beta-3 (CHRNB3) from Gallus gallus (Chicken).